The primary structure comprises 488 residues: MKLKEIALFNELAPGEAGEVEITGITSDSRAVQRGFLFAALKGVKADGAVFAADAAKRGAVAIIAGKDTAIADAGVPVLHVDDPRHVLAIAAAQFYGKQPEVMVAVTGTSGKTSVASFTRQIWAYAGFPAANIGTTGVFSPTRSDYNSLTTPDPVELHRVLAELASEGVTHAAMEASSHGLDQRRLDGVRLAAGAFTNLGRDHMDYHATIDEYLGAKMRLFNALLPKGAPAIIFADDQFSAQAIEAATLAGCDVKTVGRKGNFIALKRVEHERFRQHVEVRIGEEIFEIELPLAGDFQVANALVAAGLAMVTGVPAAAAMRALALLKGAPGRLDLVGATEDGAPAYVDYAHKPEALENVLTSVRPFTTGRVIVVFGCGGDRDKGKRPIMGEIASRLADVVIVTDDNPRSEVPAQIRSEIMAAATGATEIGDRREAIFTAVSMMQPGDTLVVAGKGHEEGQIVGNITLPFSDHAEVAAALAARLEEHLK.

Residue S29 coordinates UDP-N-acetyl-alpha-D-muramoyl-L-alanyl-D-glutamate. 108–114 (GTSGKTS) contributes to the ATP binding site. UDP-N-acetyl-alpha-D-muramoyl-L-alanyl-D-glutamate-binding positions include 150-151 (TT), S177, Q183, and R185. Residue K217 is modified to N6-carboxylysine. Meso-2,6-diaminopimelate contacts are provided by residues R381, 405-408 (DNPR), G453, and E457. The short motif at 405 to 408 (DNPR) is the Meso-diaminopimelate recognition motif element.

The protein belongs to the MurCDEF family. MurE subfamily. Mg(2+) serves as cofactor. In terms of processing, carboxylation is probably crucial for Mg(2+) binding and, consequently, for the gamma-phosphate positioning of ATP.

It is found in the cytoplasm. It carries out the reaction UDP-N-acetyl-alpha-D-muramoyl-L-alanyl-D-glutamate + meso-2,6-diaminopimelate + ATP = UDP-N-acetyl-alpha-D-muramoyl-L-alanyl-gamma-D-glutamyl-meso-2,6-diaminopimelate + ADP + phosphate + H(+). Its pathway is cell wall biogenesis; peptidoglycan biosynthesis. Its function is as follows. Catalyzes the addition of meso-diaminopimelic acid to the nucleotide precursor UDP-N-acetylmuramoyl-L-alanyl-D-glutamate (UMAG) in the biosynthesis of bacterial cell-wall peptidoglycan. This Brucella melitensis biotype 1 (strain ATCC 23456 / CCUG 17765 / NCTC 10094 / 16M) protein is UDP-N-acetylmuramoyl-L-alanyl-D-glutamate--2,6-diaminopimelate ligase.